A 67-amino-acid polypeptide reads, in one-letter code: Large ribosomal subunit protein uL30 (67 aa).

It belongs to the universal ribosomal protein uL30 family. Part of the 50S ribosomal subunit.

The sequence is that of Large ribosomal subunit protein uL30 from Thermotoga neapolitana (strain ATCC 49049 / DSM 4359 / NBRC 107923 / NS-E).